Reading from the N-terminus, the 393-residue chain is Endoplasmic reticulum junction formation protein lunapark-A (393 aa).

At 1–45 (MGAVVSRWRAKPSTVEVLEGLDKDIQVLEEYREKNHKQLKLWVYR) the chain is on the cytoplasmic side. Residues 46 to 66 (LLLYSALLYLMACAVVYAWYI) form a helical membrane-spanning segment. At 67-69 (PER) the chain is on the lumenal side. The helical transmembrane segment at 70-90 (MIGKLIVASPFLLFPLLIWLL) threads the bilayer. Topologically, residues 91–393 (RKLLIILYNK…EQDVSAMEVE (303 aa)) are cytoplasmic. Positions 95-130 (IILYNKRTERNNEKLEELKAEKKKILEQVMETETYK) form a coiled coil. Residues 146–209 (KLELETQPIG…PPEKGLSAST (64 aa)) form a disordered region. Positions 176-190 (TGRPPPVPVPGPSVP) are enriched in pro residues. The C4-type; plays a role in ER morphology zinc-finger motif lies at 269-294 (CQQCLSHNGMALKEEFEYIAFRCAYC). Residues 314-393 (AAEAKTSQDP…EQDVSAMEVE (80 aa)) form a disordered region. Basic and acidic residues-rich tracts occupy residues 340 to 353 (ESKEAGPEPVKAGD) and 364 to 383 (EEMKPGDPEPHTDIPDKSDG).

Belongs to the lunapark family. In terms of assembly, homodimer; homodimerization requires the C4-type zinc finger motif and decreases during mitosis in a phosphorylation-dependent manner. Post-translationally, phosphorylated. Phosphorylation occurs during interphase. Phosphorylation also occurs during mitosis; these phosphorylations reduce both its homodimerization and the ER three-way tubular junction formation.

It localises to the endoplasmic reticulum membrane. Endoplasmic reticulum (ER)-shaping membrane protein that plays a role in determining ER morphology. Involved in the stabilization of nascent three-way ER tubular junctions within the ER network. May also play a role as a curvature-stabilizing protein within three-way ER tubular junction network. The protein is Endoplasmic reticulum junction formation protein lunapark-A (lnpka) of Danio rerio (Zebrafish).